Consider the following 188-residue polypeptide: ADP-ribosylation factor K (188 aa).

GTP-binding positions include aspartate 34–threonine 40, aspartate 75–glutamine 79, and asparagine 134–aspartate 137.

The protein belongs to the small GTPase superfamily. Arf family.

It localises to the golgi apparatus. In terms of biological role, GTP-binding protein that may be involved in protein trafficking. May modulate vesicle budding and uncoating within the Golgi apparatus. The sequence is that of ADP-ribosylation factor K (arrK) from Dictyostelium discoideum (Social amoeba).